Here is a 224-residue protein sequence, read N- to C-terminus: Cerebellin-2 (224 aa).

The first 51 residues, 1-51, serve as a signal peptide directing secretion; that stretch reads MQAPGRGPLGLRLMMPGRRGALREPGGCGSCLGVALALLLLLLPACCPVRA. 2 N-linked (GlcNAc...) asparagine glycosylation sites follow: N53 and N110. The C1q domain maps to 88-224; sequence SGSAKVAFSA…TFSGFLVFPL (137 aa).

As to quaternary structure, homohexamer; disulfide-linked homotrimers. The trimers are assembled via the globular C1q domains. The trimers associate via N-terminal cysteine residues to form disulfide-linked hexamers. May form homooligomers or heterooligomers with CBLN1 and CBLN3 prior to secretion. Once secreted, does not interact with other CBLN family members. Interacts with GRID2, and more weakly with GRID1. Interacts with NRXN1 and NRXN2 long and short isoforms produced by alternative promoter usage. Weakly interacts with NRXN3 short isoform and not at all with NRXN3 long isoform.

The protein localises to the secreted. In terms of biological role, acts as a synaptic organizer in specific subsets of neurons in the brain. Essential for long-term maintenance but not establishment of excitatory synapses. Functions as part of a trans-synaptic complex by binding to postsynaptic GRID1 and presynaptic neurexins. This interaction helps regulate the activity of NMDA and AMPA receptors at hippocampal synapses without affecting synapse formation. NRXN1B-CBLN2-GRID1 complex transduce presynaptic signals into postsynaptic NMDAR response. NRXN3B-CBLN2-GRID1 complex transduce presynaptic signals into postsynaptic AMPAR response. In Homo sapiens (Human), this protein is Cerebellin-2.